A 344-amino-acid polypeptide reads, in one-letter code: L-rhamnose-proton symporter (344 aa).

The next 10 helical transmembrane spans lie at 4-24 (AITM…CFYA), 38-58 (WSVG…ALLL), 68-88 (FNLS…IGNI), 101-121 (MGIG…TPII), 137-157 (TLLG…AGQL), 175-195 (LLLA…MNAA), 214-234 (LPSY…FCFI), 259-279 (ILLS…YAWG), 290-310 (MSWM…GLVL), and 321-341 (VAVL…VGLG).

The protein belongs to the L-rhamnose transporter (TC 2.A.7.6) family.

The protein resides in the cell inner membrane. The catalysed reaction is L-rhamnopyranose(in) + H(+)(in) = L-rhamnopyranose(out) + H(+)(out). Functionally, uptake of L-rhamnose across the cytoplasmic membrane with the concomitant transport of protons into the cell (symport system). This is L-rhamnose-proton symporter from Salmonella dublin (strain CT_02021853).